The following is a 370-amino-acid chain: MTRGLAPLLPIEFHKMGSFRRPRPRFMSSPVLSELPRFQAARQALQLSSNSAWNSVQTAVINVFKGGGLQSNELYALNESIRRLLKSELGSFITDYFQNQLLAKGLSFVEEKIKLCEGDNRIEVLAEVWDHFFTETLPTLQAIFYPVQGQELTIRQISLLGFRDLVLLKVKLGDVLLLAQSKLPSSVIQMLLILQSVHEPTGPSEGYLQLEELVKQVVSPFLSISGDRSCSGPTYSLARRHSRVRPKVTVLNYASLMTTVGRPLNEMVLTPLTEQEGEAYLEKCGSVRRHTVANAHSDIQLLAMATMMHSGLGEEAGGEDKHLLLPPSFPPPHRQCSSEPSILDSPDELELEDVASGSQEDSELNCASLS.

Phosphoserine is present on serine 28. 2 disordered regions span residues 312 to 346 (LGEEAGGEDKHLLLPPSFPPPHRQCSSEPSILDSP) and 351 to 370 (LEDVASGSQEDSELNCASLS).

Belongs to the PROTOR family. In terms of assembly, interacts with the mammalian target of rapamycin complex 2 (mTORC2) which contains MTOR, MLST8, PRR5, RICTOR, MAPKAP1 and DEPTOR. Interacts with RFFL. Interacts (via C-terminus) with ZFP36 (via C-terminus); this interaction may accelerate ZFP36-mediated mRNA decay during stress. Interacts with RICTOR. Post-translationally, ubiquitinated. Ubiquitination by RFFL promotes proteasomal degradation of PRR5L thereby modifying the substrate-specific activity of the mTORC2 complex. Ubiquitination by RFFL is stimulated by LPA/lysophosphatidic acid.

Its function is as follows. Associates with the mTORC2 complex that regulates cellular processes including survival and organization of the cytoskeleton. Regulates the activity of the mTORC2 complex in a substrate-specific manner preventing for instance the specific phosphorylation of PKCs and thereby controlling cell migration. Plays a role in the stimulation of ZFP36-mediated mRNA decay of several ZFP36-associated mRNAs, such as TNF-alpha and GM-CSF, in response to stress. Required for ZFP36 localization to cytoplasmic stress granule (SG) and P-body (PB) in response to stress. The sequence is that of Proline-rich protein 5-like (Prr5l) from Mus musculus (Mouse).